Consider the following 688-residue polypeptide: G protein-coupled receptor kinase 3 (688 aa).

Residues 1 to 190 (MADLEAVLAD…ELNIHLSMND (190 aa)) form an N-terminal region. The 122-residue stretch at 54 to 175 (TFDKIFNQKI…MESEKFTRFC (122 aa)) folds into the RGS domain. The Protein kinase domain occupies 191–453 (FSVHRIIGRG…ARELKEHIFF (263 aa)). ATP is bound by residues 197-205 (IGRGGFGEV) and K220. Catalysis depends on D317, which acts as the Proton acceptor. An AGC-kinase C-terminal domain is found at 454-521 (KGIDWQYVYL…MISERWQQEV (68 aa)). Positions 558–652 (DCIMHGYMLK…WLKELTCTFN (95 aa)) constitute a PH domain.

This sequence belongs to the protein kinase superfamily. AGC Ser/Thr protein kinase family. GPRK subfamily. Interacts with GIT1. Ubiquitinated. Expressed in brain cortex, hippocampus, striatum, hypothalamus, cerebellum and brainstem (at protein level).

The protein localises to the postsynapse. Its subcellular location is the presynapse. The enzyme catalyses [beta-adrenergic receptor] + ATP = [beta-adrenergic receptor]-phosphate + ADP + H(+). Its function is as follows. Specifically phosphorylates the agonist-occupied form of the beta-adrenergic and closely related receptors. This chain is G protein-coupled receptor kinase 3, found in Rattus norvegicus (Rat).